Here is a 121-residue protein sequence, read N- to C-terminus: Large ribosomal subunit protein bL12 (121 aa).

Belongs to the bacterial ribosomal protein bL12 family. In terms of assembly, homodimer. Part of the ribosomal stalk of the 50S ribosomal subunit. Forms a multimeric L10(L12)X complex, where L10 forms an elongated spine to which 2 to 4 L12 dimers bind in a sequential fashion. Binds GTP-bound translation factors.

Forms part of the ribosomal stalk which helps the ribosome interact with GTP-bound translation factors. Is thus essential for accurate translation. The chain is Large ribosomal subunit protein bL12 from Clostridium novyi (strain NT).